The following is a 361-amino-acid chain: Cell cycle control protein 50A (361 aa).

Positions Met-1–Pro-28 are disordered. Ala-2 carries the post-translational modification N-acetylalanine. Positions Ala-2–Gly-48 are required for ATPase and aminophospholipid flippase activity. At Ala-2–Thr-49 the chain is on the cytoplasmic side. The tract at residues Thr-49–His-348 is interaction with ATP8A2. The chain crosses the membrane as a helical span at residues Val-50–Val-70. The Exoplasmic loop segment spans residues Thr-71–Leu-325. Disulfide bonds link Cys-91/Cys-104, Cys-94/Cys-102, and Cys-157/Cys-171. N-linked (GlcNAc...) asparagine glycosylation is found at Asn-180, Asn-190, and Asn-294. Residues Gly-326–Ile-346 form a helical membrane-spanning segment. Residues Asn-347–Ile-361 are Cytoplasmic-facing.

It belongs to the CDC50/LEM3 family. In terms of assembly, component of various P4-ATPase flippase complexes which consists of a catalytic alpha subunit and an accessory beta subunit. Interacts with ATP8A1 to form a flippase complex; this complex forms an intermediate phosphoenzyme. Interacts with ATP8A2 to form a flippase complex. ATP8B1:TMEM30A and ATP8B2:TMEM30A flippase complexes have been shown to form intermediate phosphoenzymes in vitro. Interacts with alpha subunits ATP8A1, ATP8B1, ATP8B2, ATP8B4, ATP10A, ATP10B, ATP10D, ATP11A, ATP11B and ATP11C. N-glycosylated; contributes to ATP8A2:TMEM30A flippase complex assembly but not to functional activity. As to expression, expressed in photoreceptor cells; detected in retina outer segment and other retinal layers (at protein level).

It localises to the membrane. The protein localises to the golgi apparatus. It is found in the cytoplasmic vesicle. The protein resides in the secretory vesicle membrane. Its subcellular location is the apical cell membrane. It localises to the photoreceptor inner segment. The protein localises to the cell projection. It is found in the cilium. The protein resides in the photoreceptor outer segment. In terms of biological role, accessory component of a P4-ATPase flippase complex which catalyzes the hydrolysis of ATP coupled to the transport of aminophospholipids from the outer to the inner leaflet of various membranes and ensures the maintenance of asymmetric distribution of phospholipids. Phospholipid translocation also seems to be implicated in vesicle formation and in uptake of lipid signaling molecules. The beta subunit may assist in binding of the phospholipid substrate. Required for the proper folding, assembly and ER to Golgi exit of the ATP8A2:TMEM30A flippase complex. ATP8A2:TMEM30A may be involved in regulation of neurite outgrowth, and, reconstituted to liposomes, predomiminantly transports phosphatidylserine (PS) and to a lesser extent phosphatidylethanolamine (PE). The ATP8A1:TMEM30A flippase complex seems to play a role in regulation of cell migration probably involving flippase-mediated translocation of phosphatidylethanolamine (PE) at the plasma membrane. Required for the formation of the ATP8A2, ATP8B1 and ATP8B2 P-type ATPAse intermediate phosphoenzymes. Involved in uptake of platelet-activating factor (PAF). Can also mediate the export of alpha subunits ATP8A1, ATP8B1, ATP8B2, ATP8B4, ATP10A, ATP10B, ATP10D, ATP11A, ATP11B and ATP11C from the ER to other membrane localizations. The protein is Cell cycle control protein 50A of Bos taurus (Bovine).